We begin with the raw amino-acid sequence, 24 residues long: Aldehyde dehydrogenase gamma chain (24 aa).

In terms of assembly, heterotrimer composed of an alpha, a beta and a gamma chain. The cofactor is [2Fe-2S] cluster.

It catalyses the reaction an aldehyde + a quinone + H2O = a quinol + a carboxylate + H(+). The chain is Aldehyde dehydrogenase gamma chain from Comamonas testosteroni (Pseudomonas testosteroni).